The following is a 245-amino-acid chain: Aliphatic sulfonates import ATP-binding protein SsuB 1 (245 aa).

Residues 8–223 form the ABC transporter domain; that stretch reads VSITGLRKSF…ERADPDILRY (216 aa). 40–47 is a binding site for ATP; sequence GPSGTGKT.

The protein belongs to the ABC transporter superfamily. Aliphatic sulfonates importer (TC 3.A.1.17.2) family. The complex is composed of two ATP-binding proteins (SsuB), two transmembrane proteins (SsuC) and a solute-binding protein (SsuA).

The protein resides in the cell membrane. The enzyme catalyses ATP + H2O + aliphatic sulfonate-[sulfonate-binding protein]Side 1 = ADP + phosphate + aliphatic sulfonateSide 2 + [sulfonate-binding protein]Side 1.. Its function is as follows. Part of the ABC transporter complex SsuABC involved in aliphatic sulfonates import. Responsible for energy coupling to the transport system. In Nocardia farcinica (strain IFM 10152), this protein is Aliphatic sulfonates import ATP-binding protein SsuB 1.